An 86-amino-acid chain; its full sequence is Exodeoxyribonuclease 7 small subunit (86 aa).

Belongs to the XseB family. In terms of assembly, heterooligomer composed of large and small subunits.

It is found in the cytoplasm. The enzyme catalyses Exonucleolytic cleavage in either 5'- to 3'- or 3'- to 5'-direction to yield nucleoside 5'-phosphates.. Its function is as follows. Bidirectionally degrades single-stranded DNA into large acid-insoluble oligonucleotides, which are then degraded further into small acid-soluble oligonucleotides. This chain is Exodeoxyribonuclease 7 small subunit, found in Agrobacterium fabrum (strain C58 / ATCC 33970) (Agrobacterium tumefaciens (strain C58)).